A 195-amino-acid chain; its full sequence is Peroxisomal membrane protein 2 (195 aa).

At 1–30 the chain is on the cytoplasmic side; the sequence is MAPAASRLRAEAGLGALPRRALAQYLLFLR. The helical transmembrane segment at 31-51 threads the bilayer; the sequence is LYPVLTKAATSGILSALGNFL. At 52-75 the chain is on the peroxisomal side; sequence AQMIEKKRKKENSRSLDVGGPLRY. Residues 76–96 form a helical membrane-spanning segment; the sequence is AVYGFFFTGPLSHFFYFFMEH. At 97 to 114 the chain is on the cytoplasmic side; the sequence is WIPPEVPLAGLRRLLLDR. The helical transmembrane segment at 115–135 threads the bilayer; it reads LVFAPAFLMLFFLIMNFLEGK. Residues 136–173 lie on the Peroxisomal side of the membrane; sequence DASAFAAKMRGGFWPALRMNWRVWTPLQFININYVPLK. Residues 174–194 traverse the membrane as a helical segment; that stretch reads FRVLFANLAALFWYAYLASLG.

Belongs to the peroxisomal membrane protein PXMP2/4 family. In terms of assembly, interacts with PEX19 and SIVA1.

Its subcellular location is the peroxisome membrane. Its function is as follows. Seems to be involved in pore-forming activity and may contribute to the unspecific permeability of the peroxisomal membrane. The sequence is that of Peroxisomal membrane protein 2 (PXMP2) from Homo sapiens (Human).